Reading from the N-terminus, the 720-residue chain is Glutaryl-7-aminocephalosporanic-acid acylase (720 aa).

The first 29 residues, Met1–Ala29, serve as a signal peptide directing secretion. The propeptide at Asp190–Gly198 is spacer peptide. Ser199 (nucleophile) is an active-site residue. Catalysis depends on residues His221 and Glu653.

It belongs to the peptidase S45 family. As to quaternary structure, heterotetramer of two alpha and two beta subunits processed from the same precursor.

The protein localises to the periplasm. It carries out the reaction (7R)-7-(4-carboxybutanamido)cephalosporanate + H2O = (7R)-7-aminocephalosporanate + glutarate. In terms of biological role, catalyzes the deacylation of 7 beta-(4-carboxybutanamido)cephalosporanic acid (glutaryl-7-aminocephalosporanic acid or GL-7-ACA) to 7-aminocephalosporanic acid (7-ACA). The protein is Glutaryl-7-aminocephalosporanic-acid acylase of Pseudomonas sp. (strain SY-77).